A 150-amino-acid polypeptide reads, in one-letter code: Transcriptional repressor NrdR (150 aa).

Residues 1 to 22 (MKCPYCSAPDSRVVNSRPSDDG) form a disordered region. A zinc finger spans residues 3-34 (CPYCSAPDSRVVNSRPSDDGASIRRRRECLRC). In terms of domain architecture, ATP-cone spans 49–136 (LMVLKRGGQR…VYRDFDSLER (88 aa)).

It belongs to the NrdR family. Zn(2+) is required as a cofactor.

Its function is as follows. Negatively regulates transcription of bacterial ribonucleotide reductase nrd genes and operons by binding to NrdR-boxes. The sequence is that of Transcriptional repressor NrdR from Deinococcus geothermalis (strain DSM 11300 / CIP 105573 / AG-3a).